Reading from the N-terminus, the 360-residue chain is MNDKRVFNHVENNAGNEEEVFRVKREFSETAEIIPDLTALDDEREEKQALEGELLASQFEQAVRPRFRWWKRAVIAVAVLFLGATVAQSVQWLIDTWQANQWIYFAFAVVGCSVVGLGLSALGREFLRLRKLRQHLALRAESAVEFKDDFEIDKAKKLCGEITSSLGMDAQHPTVIQWQKQLNDGLTAREVGELFSKNVLYPIDNKAKKLITQSAVENGIVVAISPLAIVDMLFLAWRNTRLINRIANIYGIELGYWSRLRLMRMVFINMAFTGATELVQDIGLDWLSQDITAKLSGRIGQGLGVGLLTARLGIKTMEFCRPLTFNKDEKPRLSHIHRELLTSLKSVVLRSDKSRKKQNV.

A run of 3 helical transmembrane segments spans residues V74–I94, W102–L122, and A215–L235.

It belongs to the UPF0283 family.

Its subcellular location is the cell inner membrane. This is UPF0283 membrane protein Asuc_0957 from Actinobacillus succinogenes (strain ATCC 55618 / DSM 22257 / CCUG 43843 / 130Z).